The primary structure comprises 350 residues: Izumo sperm-egg fusion protein 1 (350 aa).

Residues 1 to 21 form the signal peptide; that stretch reads MGPHFTLLCAALAGCLLPAEG. 5 disulfide bridges follow: Cys-22/Cys-149, Cys-25/Cys-152, Cys-135/Cys-159, Cys-139/Cys-165, and Cys-182/Cys-233. Residues 22–292 are Extracellular-facing; sequence CVICDPSVVL…LQPEKMLASR (271 aa). The tract at residues 148-160 is important for interaction with IZUMO1R; that stretch reads WCKNCKKEVHACR. In terms of domain architecture, Ig-like C2-type spans 167–251; the sequence is ERNVEVPQME…PATIINFHVT (85 aa). N-linked (GlcNAc...) asparagine glycosylation occurs at Asn-204. A helical membrane pass occupies residues 293 to 313; the sequence is LLGLLICGSLALITGLTFAIF. The Cytoplasmic portion of the chain corresponds to 314-350; it reads RRRKVIDFIKSSLFGLGSGAAEQTQVPKEKATDSRQQ. The residue at position 325 (Ser-325) is a Phosphoserine.

This sequence belongs to the Izumo family. As to quaternary structure, monomer, homodimer; disulfide-linked and homooligomer; depending on the context. Interacts with IZUMO1R/JUNO. IZUMO1 and IZUMO1R/JUNO form a complex with 1:1 stoichiometry. In gamete recognition, IZUMO1R/JUNO first binds to monomeric IZUMO1. The weak, but specific interaction with IZUMO1R/JUNO induces IZUMO1 homodimerization. The process follows a tight binding phase where IZUMO1 bends the entire structure towards the sperm membrane side through a thiol-disulfide exchange reaction. The molecule no longer binds to IZUMO1R/JUNO and instead binds to a putative second oocyte receptor. Interacts with ACE3. Part of a oolemmal binding multimeric complex (IZUMO1 complex) composed at least of IZUMO1 and GLIPR1L1; the complex assemblage is influenced by the maturation status of the male germ cell. Interacts with GLIPR1L1. Interacts with FREY; the interaction retains IZUMO1 at the endoplasmic reticulum membrane and coordinates IZUMO1 complex assembly. Interacts with FCRL3/MAIA (via extracellular domain); the interaction replaces IZUMO1R/JUNO as IZUMO1 receptor after sperm-egg adhesion. Interacts with WDR54. Forms a complex with SPACA6 and TMEM81 on spermatocyte cell membrane. In terms of processing, N-glycosylated. Glycosylation is not essential for fusion and for proper protein trafficking in sperm. Post-translationally, phosphorylated. The cytoplasmic C-terminus is phosphorylated and undergoes phosphorylation changes during epididymal transit. As to expression, sperm-specific (at protein level). Detectable on sperm surface only after the acrosome reaction.

Its subcellular location is the cell membrane. The protein resides in the cytoplasmic vesicle. It localises to the secretory vesicle. The protein localises to the acrosome membrane. Functionally, essential sperm cell-surface protein required for fertilization by acting as a ligand for IZUMO1R/JUNO receptor on egg. The IZUMO1:IZUMO1R/JUNO interaction is a necessary adhesion event between sperm and egg that is required for fertilization but is not sufficient for cell fusion. The ligand-receptor interaction probably does not act as a membrane 'fusogen'. Acts a ligand for the human-specific oolemma epitope FCRL3/MAIA during fertilization. FCRL3/MAIA replaces IZUMO1R/JUNO as IZUMO1 receptor after sperm-egg adhesion, which permits species-specific gamete fusion. Plays a critical role in sperm-oolemma binding prior to plasma membrane fusion. Can mediate cell-cell fusion in cultured mammalian cells independently of its binding to IZUMO1R/JUNO. The protein is Izumo sperm-egg fusion protein 1 of Homo sapiens (Human).